Consider the following 259-residue polypeptide: tRNA pseudouridine synthase A (259 aa).

The Nucleophile role is filled by Asp-52. Tyr-110 is a binding site for substrate.

This sequence belongs to the tRNA pseudouridine synthase TruA family. As to quaternary structure, homodimer.

It carries out the reaction uridine(38/39/40) in tRNA = pseudouridine(38/39/40) in tRNA. Functionally, formation of pseudouridine at positions 38, 39 and 40 in the anticodon stem and loop of transfer RNAs. The chain is tRNA pseudouridine synthase A from Coprothermobacter proteolyticus (strain ATCC 35245 / DSM 5265 / OCM 4 / BT).